The primary structure comprises 164 residues: ATP synthase subunit b (164 aa).

Residues leucine 10 to tyrosine 30 traverse the membrane as a helical segment.

The protein belongs to the ATPase B chain family. As to quaternary structure, F-type ATPases have 2 components, F(1) - the catalytic core - and F(0) - the membrane proton channel. F(1) has five subunits: alpha(3), beta(3), gamma(1), delta(1), epsilon(1). F(0) has three main subunits: a(1), b(2) and c(10-14). The alpha and beta chains form an alternating ring which encloses part of the gamma chain. F(1) is attached to F(0) by a central stalk formed by the gamma and epsilon chains, while a peripheral stalk is formed by the delta and b chains.

The protein localises to the cell membrane. In terms of biological role, f(1)F(0) ATP synthase produces ATP from ADP in the presence of a proton or sodium gradient. F-type ATPases consist of two structural domains, F(1) containing the extramembraneous catalytic core and F(0) containing the membrane proton channel, linked together by a central stalk and a peripheral stalk. During catalysis, ATP synthesis in the catalytic domain of F(1) is coupled via a rotary mechanism of the central stalk subunits to proton translocation. Functionally, component of the F(0) channel, it forms part of the peripheral stalk, linking F(1) to F(0). This chain is ATP synthase subunit b, found in Herpetosiphon aurantiacus (strain ATCC 23779 / DSM 785 / 114-95).